A 403-amino-acid polypeptide reads, in one-letter code: Imidazolonepropionase (403 aa).

Fe(3+)-binding residues include H68 and H70. The Zn(2+) site is built by H68 and H70. Residues R77, Y140, and H173 each coordinate 4-imidazolone-5-propanoate. Y140 lines the N-formimidoyl-L-glutamate pocket. H238 contributes to the Fe(3+) binding site. H238 contacts Zn(2+). Q241 provides a ligand contact to 4-imidazolone-5-propanoate. D313 provides a ligand contact to Fe(3+). D313 is a Zn(2+) binding site. N-formimidoyl-L-glutamate is bound by residues N315 and G317. T318 contributes to the 4-imidazolone-5-propanoate binding site.

Belongs to the metallo-dependent hydrolases superfamily. HutI family. Requires Zn(2+) as cofactor. Fe(3+) is required as a cofactor.

The protein resides in the cytoplasm. It catalyses the reaction 4-imidazolone-5-propanoate + H2O = N-formimidoyl-L-glutamate. It participates in amino-acid degradation; L-histidine degradation into L-glutamate; N-formimidoyl-L-glutamate from L-histidine: step 3/3. Catalyzes the hydrolytic cleavage of the carbon-nitrogen bond in imidazolone-5-propanoate to yield N-formimidoyl-L-glutamate. It is the third step in the universal histidine degradation pathway. The protein is Imidazolonepropionase of Psychromonas ingrahamii (strain DSM 17664 / CCUG 51855 / 37).